The chain runs to 401 residues: MFQPSPWRADFPAIAALQRQHQTYLDSAATTQKPQALLDALSHYYGHGAANVHRAQHLPGALATQAFETSRDKVAAWLNAADSRQIVFTHGATSALNLLAYGLEHRLEAGDEIAISALEHHANLLPWQQLAHRRNLHLVVLPLDAHGRIDQDQALQLIGPRTRVLAISQLSNVLGTWQPLPALLAHARAQGALTVVDGAQGVVHGRQDMQQLGCDFYVFSSHKLYGPDGVGVLYGRAQALELLRHWQFGGEMVQLAEYHSASFRPAPLGFEAGTPPIAGVIGLGATLDYLASLDAHAVAAHEASLHQHLLRGLGDREGVRVLGAPQTALASFVIEGVHNADIAHLLTEQGIAVRAGHHCAMPLLKGLGLEGAIRVSLGLYNDSDDVQRFFDALDQGLELLR.

Residue lysine 223 is modified to N6-(pyridoxal phosphate)lysine.

This sequence belongs to the class-V pyridoxal-phosphate-dependent aminotransferase family. Csd subfamily. Requires pyridoxal 5'-phosphate as cofactor.

The enzyme catalyses (sulfur carrier)-H + L-cysteine = (sulfur carrier)-SH + L-alanine. Its function is as follows. Catalyzes the removal of elemental sulfur and selenium atoms from L-cysteine, L-cystine, L-selenocysteine, and L-selenocystine to produce L-alanine. This is Probable cysteine desulfurase (csdA) from Pseudomonas putida (strain ATCC 47054 / DSM 6125 / CFBP 8728 / NCIMB 11950 / KT2440).